Here is a 245-residue protein sequence, read N- to C-terminus: uncharacterized protein (245 aa).

This is an uncharacterized protein from Acanthamoeba polyphaga (Amoeba).